The sequence spans 358 residues: Protein-arginine kinase (358 aa).

The 228-residue stretch at valine 23–alanine 250 folds into the Phosphagen kinase C-terminal domain. ATP contacts are provided by residues valine 26–serine 30, lysine 174–phenylalanine 178, and serine 203–glycine 208.

The protein belongs to the ATP:guanido phosphotransferase family.

It carries out the reaction L-arginyl-[protein] + ATP = N(omega)-phospho-L-arginyl-[protein] + ADP + H(+). In terms of biological role, catalyzes the specific phosphorylation of arginine residues in proteins. This chain is Protein-arginine kinase, found in Chlamydia pneumoniae (Chlamydophila pneumoniae).